Consider the following 375-residue polypeptide: S-(hydroxymethyl)glutathione dehydrogenase (375 aa).

Cysteine 40 is a Zn(2+) binding site. Histidine 41 is a binding site for NAD(+). Residues histidine 62, glutamate 63, cysteine 92, cysteine 95, cysteine 98, cysteine 106, and cysteine 170 each contribute to the Zn(2+) site. NAD(+)-binding positions include 195–200 (GLGGIG), aspartate 219, 293–295 (IGV), and 318–320 (TAF).

The protein belongs to the zinc-containing alcohol dehydrogenase family. Class-III subfamily. Homotetramer. It depends on Zn(2+) as a cofactor.

The catalysed reaction is a primary alcohol + NAD(+) = an aldehyde + NADH + H(+). The enzyme catalyses a secondary alcohol + NAD(+) = a ketone + NADH + H(+). It carries out the reaction S-(hydroxymethyl)glutathione + NADP(+) = S-formylglutathione + NADPH + H(+). It catalyses the reaction S-(hydroxymethyl)glutathione + NAD(+) = S-formylglutathione + NADH + H(+). The catalysed reaction is S-nitrosoglutathione + NADH + H(+) = S-(hydroxysulfenamide)glutathione + NAD(+). Its function is as follows. Oxidizes long-chain alcohols and, in the presence of glutathione, is able to oxidize formaldehyde. Also acts as a S-nitroso-glutathione reductase by catalyzing the NADH-dependent reduction of S-nitrosoglutathione, thereby regulating protein S-nitrosylation. The protein is S-(hydroxymethyl)glutathione dehydrogenase (flhA) of Paracoccus denitrificans.